A 330-amino-acid polypeptide reads, in one-letter code: NmrA-like family domain-containing oxidoreductase notO (330 aa).

NADP(+) contacts are provided by residues 12-17 (VGIGSL), 38-42 (HHFAQ), 59-60 (RS), 80-82 (IEA), and 160-163 (LGGG). A helical transmembrane segment spans residues 12-32 (VGIGSLPAGLVALFMGATSGI). The tract at residues 158-202 (SVLGGGLESPLNEQDLDLRDPKNWTFWSSSMHSGTMGTLTLERIA) is interaction with ASS1. N-linked (GlcNAc...) asparagine glycosylation is found at asparagine 180 and asparagine 207.

This sequence belongs to the NmrA-type oxidoreductase family.

It localises to the membrane. NmrA-like family domain-containing oxidoreductase; part of the gene cluster that mediates the biosynthesis of notoamide, a fungal indole alkaloid that belongs to a family of natural products containing a characteristic bicyclo[2.2.2]diazaoctane core. The first step of notoamide biosynthesis involves coupling of L-proline and L-tryptophan by the bimodular NRPS notE, to produce cyclo-L-tryptophan-L-proline called brevianamide F. The reverse prenyltransferase notF then acts as a deoxybrevianamide E synthase and converts brevianamide F to deoxybrevianamide E via reverse prenylation at C-2 of the indole ring leading to the bicyclo[2.2.2]diazaoctane core. Deoxybrevianamide E is further hydroxylated at C-6 of the indole ring, likely catalyzed by the cytochrome P450 monooxygenase notG, to yield 6-hydroxy-deoxybrevianamide E. 6-hydroxy-deoxybrevianamide E is a specific substrate of the prenyltransferase notC for normal prenylation at C-7 to produce 6-hydroxy-7-prenyl-deoxybrevianamide, also called notoamide S. As the proposed pivotal branching point in notoamide biosynthesis, notoamide S can be diverted to notoamide E through an oxidative pyran ring closure putatively catalyzed by either notH cytochrome P450 monooxygenase or the notD FAD-linked oxidoreductase. This step would be followed by an indole 2,3-epoxidation-initiated pinacol-like rearrangement catalyzed by the notB FAD-dependent monooxygenase leading to the formation of notoamide C and notoamide D. On the other hand notoamide S is converted to notoamide T by notH (or notD), a bifunctional oxidase that also functions as the intramolecular Diels-Alderase responsible for generation of (+)-notoamide T. To generate antipodal (-)-notoaminide T, notH' (or notD') in Aspergillus versicolor is expected to catalyze a Diels-Alder reaction leading to the opposite stereochemistry. The remaining oxidoreductase notD (or notH) likely catalyzes the oxidative pyran ring formation to yield (+)-stephacidin A. The FAD-dependent monooxygenase notI is highly similar to notB and is predicted to catalyze a similar conversion from (+)-stephacidin A to (-)-notoamide B via the 2,3-epoxidation of (+)-stephacidin A followed by a pinacol-type rearrangement. Finally, it remains unclear which enzyme could be responsible for the final hydroxylation steps leading to notoamide A and sclerotiamide. The function of notO in the notoamide biosynthesis has not been determined yet. The chain is NmrA-like family domain-containing oxidoreductase notO from Aspergillus sp. (strain MF297-2).